A 218-amino-acid chain; its full sequence is 2-phospho-L-lactate guanylyltransferase (218 aa).

The protein belongs to the CofC family. In terms of assembly, homodimer.

The catalysed reaction is (2S)-2-phospholactate + GTP + H(+) = (2S)-lactyl-2-diphospho-5'-guanosine + diphosphate. The protein operates within cofactor biosynthesis; coenzyme F420 biosynthesis. Guanylyltransferase that catalyzes the activation of (2S)-2-phospholactate (2-PL) as (2S)-lactyl-2-diphospho-5'-guanosine, via the condensation of 2-PL with GTP. It is involved in the biosynthesis of coenzyme F420, a hydride carrier cofactor. The protein is 2-phospho-L-lactate guanylyltransferase of Methanocaldococcus fervens (strain DSM 4213 / JCM 15782 / AG86) (Methanococcus fervens).